The chain runs to 53 residues: Photosystem II reaction center protein K (53 aa).

Positions 1–16 are excised as a propeptide; the sequence is MLKFYLENVFHLIFFA. Residues 28 to 48 traverse the membrane as a helical segment; the sequence is IVNVMPIIPLFFFLLAFVWQA.

The protein belongs to the PsbK family. PSII is composed of 1 copy each of membrane proteins PsbA, PsbB, PsbC, PsbD, PsbE, PsbF, PsbH, PsbI, PsbJ, PsbK, PsbL, PsbM, PsbT, PsbX, PsbY, PsbZ, Psb30/Ycf12, at least 3 peripheral proteins of the oxygen-evolving complex and a large number of cofactors. It forms dimeric complexes.

Its subcellular location is the plastid. It localises to the chloroplast thylakoid membrane. One of the components of the core complex of photosystem II (PSII). PSII is a light-driven water:plastoquinone oxidoreductase that uses light energy to abstract electrons from H(2)O, generating O(2) and a proton gradient subsequently used for ATP formation. It consists of a core antenna complex that captures photons, and an electron transfer chain that converts photonic excitation into a charge separation. This chain is Photosystem II reaction center protein K, found in Huperzia lucidula (Shining clubmoss).